We begin with the raw amino-acid sequence, 202 residues long: NADH:(hydroxy)cinnamate reductase subunit CrdA (202 aa).

This sequence belongs to the NADH-dependent flavin reductase family. NADH:(hydroxy)cinnamate reductase Crd is a heterodimer composed of CrdA and CrdB subunits, encoded by adjacent genes. It depends on FMN as a cofactor.

Component of the NADH:(hydroxy)cinnamate reductase. CrdA is probably reduced by NADH and then transfers the electrons to the catalytic center of CrdB. Is likely involved in protecting V.ruber from (hydroxy)cinnamate poisoning. This chain is NADH:(hydroxy)cinnamate reductase subunit CrdA, found in Vibrio ruber (strain DSM 16370 / JCM 11486 / BCRC 17186 / CECT 7878 / LMG 23124 / VR1).